The primary structure comprises 144 residues: Ribosomal RNA large subunit methyltransferase H (144 aa).

S-adenosyl-L-methionine contacts are provided by residues L63, G92, and 111–116 (LSPMTF).

Belongs to the RNA methyltransferase RlmH family. Homodimer.

It localises to the cytoplasm. The catalysed reaction is pseudouridine(1915) in 23S rRNA + S-adenosyl-L-methionine = N(3)-methylpseudouridine(1915) in 23S rRNA + S-adenosyl-L-homocysteine + H(+). In terms of biological role, specifically methylates the pseudouridine at position 1915 (m3Psi1915) in 23S rRNA. In Synechococcus sp. (strain CC9605), this protein is Ribosomal RNA large subunit methyltransferase H.